Reading from the N-terminus, the 157-residue chain is Large ribosomal subunit protein bL34c (157 aa).

A chloroplast-targeting transit peptide spans 1-97 (MASLSTSVVA…GQRRRGLVVR (97 aa)).

Belongs to the bacterial ribosomal protein bL34 family. In terms of assembly, part of the 50S ribosomal subunit.

It is found in the plastid. Its subcellular location is the chloroplast. Its function is as follows. This protein binds directly to 23S ribosomal RNA. The chain is Large ribosomal subunit protein bL34c (RPL34) from Arabidopsis thaliana (Mouse-ear cress).